We begin with the raw amino-acid sequence, 429 residues long: Large ribosomal subunit protein mL37 (429 aa).

A mitochondrion-targeting transit peptide spans 1-29 (MALRPVVLRRAPAHSRGILTRPGPPRPRG). The disordered stretch occupies residues 12-45 (PAHSRGILTRPGPPRPRGPLPRTPWTTRGPPPDQ). Residues 22-33 (PGPPRPRGPLPR) show a composition bias toward pro residues.

The protein belongs to the mitochondrion-specific ribosomal protein mL37 family. As to quaternary structure, component of the mitochondrial ribosome large subunit (39S) which comprises a 16S rRNA and about 50 distinct proteins.

It localises to the mitochondrion. This chain is Large ribosomal subunit protein mL37 (MRPL37), found in Gallus gallus (Chicken).